Reading from the N-terminus, the 316-residue chain is Transaldolase 2 (316 aa).

The active-site Schiff-base intermediate with substrate is Lys-131.

The protein belongs to the transaldolase family. Type 1 subfamily. In terms of assembly, homodimer.

It is found in the cytoplasm. The catalysed reaction is D-sedoheptulose 7-phosphate + D-glyceraldehyde 3-phosphate = D-erythrose 4-phosphate + beta-D-fructose 6-phosphate. It participates in carbohydrate degradation; pentose phosphate pathway; D-glyceraldehyde 3-phosphate and beta-D-fructose 6-phosphate from D-ribose 5-phosphate and D-xylulose 5-phosphate (non-oxidative stage): step 2/3. Its function is as follows. Transaldolase is important for the balance of metabolites in the pentose-phosphate pathway. The polypeptide is Transaldolase 2 (Salmonella choleraesuis (strain SC-B67)).